The sequence spans 464 residues: tRNA-2-methylthio-N(6)-dimethylallyladenosine synthase (464 aa).

The tract at residues 1–25 (MSDLVPLSRKPAPAAGDPAPSPAAP) is disordered. An MTTase N-terminal domain is found at 27 to 142 (RKVYVHTFGC…LPEMVERARG (116 aa)). [4Fe-4S] cluster contacts are provided by cysteine 36, cysteine 72, cysteine 105, cysteine 180, cysteine 184, and cysteine 187. The Radical SAM core domain occupies 166–398 (ARGRATAFVT…LAAQRRIAGE (233 aa)). The TRAM domain occupies 401 to 464 (AAELGKVVEV…GGSSLSGTLA (64 aa)).

This sequence belongs to the methylthiotransferase family. MiaB subfamily. As to quaternary structure, monomer. The cofactor is [4Fe-4S] cluster.

The protein resides in the cytoplasm. The catalysed reaction is N(6)-dimethylallyladenosine(37) in tRNA + (sulfur carrier)-SH + AH2 + 2 S-adenosyl-L-methionine = 2-methylsulfanyl-N(6)-dimethylallyladenosine(37) in tRNA + (sulfur carrier)-H + 5'-deoxyadenosine + L-methionine + A + S-adenosyl-L-homocysteine + 2 H(+). Catalyzes the methylthiolation of N6-(dimethylallyl)adenosine (i(6)A), leading to the formation of 2-methylthio-N6-(dimethylallyl)adenosine (ms(2)i(6)A) at position 37 in tRNAs that read codons beginning with uridine. This is tRNA-2-methylthio-N(6)-dimethylallyladenosine synthase from Anaeromyxobacter dehalogenans (strain 2CP-C).